The chain runs to 279 residues: HTH-type transcriptional regulator HdfR (279 aa).

Positions 1–58 (MDTELLKTFLEVSRTRHFGRAAESLYLTQSAVSFRIRQLENQLGVNLFTRHRNNIRLT) constitute an HTH lysR-type domain. Positions 18 to 37 (FGRAAESLYLTQSAVSFRIR) form a DNA-binding region, H-T-H motif.

This sequence belongs to the LysR transcriptional regulatory family.

Its function is as follows. Negatively regulates the transcription of the flagellar master operon flhDC by binding to the upstream region of the operon. The protein is HTH-type transcriptional regulator HdfR of Shigella boydii serotype 18 (strain CDC 3083-94 / BS512).